The following is a 133-amino-acid chain: Agouti-signaling protein (133 aa).

Positions 1 to 22 (MDVIHLFLATLLVSLCFLTAYS) are cleaved as a signal peptide. Basic and acidic residues predominate over residues 26–36 (PEEKPKDDRSL). A disordered region spans residues 26 to 83 (PEEKPKDDRSLRNNSSMNLLDSPSVSIMALNKKSKKISRKEAEKKKRSSKKKASMTKV). Polar residues predominate over residues 37 to 50 (RNNSSMNLLDSPSV). Asn38 and Asn39 each carry an N-linked (GlcNAc...) asparagine glycan. Over residues 70 to 79 (KKRSSKKKAS) the composition is skewed to basic residues. Disulfide bonds link Cys94–Cys109, Cys101–Cys115, Cys108–Cys126, Cys112–Cys133, and Cys117–Cys124. One can recognise an Agouti domain in the interval 94–133 (CVATRDSCKPPAPACCDPCASCQCRFFRSACSCRVLTRTC).

The protein resides in the secreted. Functionally, involved in the regulation of melanogenesis. The binding of ASP to MC1R precludes alpha-MSH initiated signaling and thus blocks production of cAMP, leading to a down-regulation of eumelanogenesis (brown/black pigment) and thus increasing synthesis of pheomelanin (yellow/red pigment). The sequence is that of Agouti-signaling protein (ASIP) from Equus caballus (Horse).